The primary structure comprises 1665 residues: Protein scribble homolog (1665 aa).

A sufficient for targeting to adherens junction and to inhibit cell proliferation region spans residues 1–804 (MLKCIPLWRC…MRVWRERMVE (804 aa)). The residue at position 37 (serine 37) is a Phosphoserine. LRR repeat units lie at residues 37-58 (SLEE…FFRL), 60-81 (NLRK…VANF), 83-104 (QLVE…IKFC), 106-127 (ALEI…FTQL), 129-150 (SLAH…VGNL), 152-174 (NLVT…SFLV), 175-197 (KLEQ…GALP), 198-219 (NLRE…LGNL), 221-243 (RLVC…GGLA), 244-265 (LLTD…IGQL), 267-288 (QLSI…IGDC), 290-312 (NLSE…GKLT), 313-334 (KLTN…IGGC), 336-357 (ALSV…LAHT), 359-381 (ELHV…THLN), and 382-402 (LKAL…QTED). Position 378 is a phosphothreonine (threonine 378). 2 disordered regions span residues 422-615 (PSLE…HFKI) and 635-689 (REGP…SAPS). Polar residues predominate over residues 428–437 (GQQSSPSESC). Acidic residues predominate over residues 452-463 (DTLEGEEDAEEA). Positions 455-475 (EGEEDAEEAAAEKRGLQRRAT) form a coiled coil. Position 475 is a phosphothreonine (threonine 475). Composition is skewed to basic and acidic residues over residues 479 to 494 (SELK…RRNE) and 570 to 580 (FAEDTLIPRED). Serine 583 carries the post-translational modification Phosphoserine. Residues 653–687 (RAHEEEEEEEEENRDEEEGEATTEEDDKEEAVASA) adopt a coiled-coil conformation. Over residues 657–681 (EEEEEEEENRDEEEGEATTEEDDKE) the composition is skewed to acidic residues. Phosphothreonine is present on residues threonine 674 and threonine 675. Phosphoserine is present on residues serine 694 and serine 750. Positions 703–1215 (IEPARIEEEE…SLESISSIDR (513 aa)) are interaction with ARHGEF7. One can recognise a PDZ 1 domain in the interval 714 to 801 (TLTIVRQTGG…AVQMRVWRER (88 aa)). The required for interaction with VIM stretch occupies residues 714-1180 (TLTIVRQTGG…TVLVCDGFDT (467 aa)). Threonine 812 carries the phosphothreonine modification. A phosphoserine mark is found at serine 821, serine 861, and serine 925. PDZ domains lie at 848-936 (AACL…ERET), 990-1079 (EICL…RRDP), and 1086-1180 (ELCI…GFDT). 8 positions are modified to phosphoserine: serine 1126, serine 1206, serine 1209, serine 1212, serine 1218, serine 1262, serine 1265, and serine 1284. Basic and acidic residues predominate over residues 1213-1228 (IDRELSPEGPGKEKEL). Positions 1213–1246 (IDRELSPEGPGKEKELASQALPWESESAETTGRN) are disordered. Disordered stretches follow at residues 1263-1325 (AGSL…DELP) and 1341-1501 (VHPP…AERR). A compositionally biased stretch (polar residues) spans 1264–1277 (GSLQRGPSATTGGK). Omega-N-methylarginine is present on lysine 1291. Position 1299 is a phosphoserine (alanine 1299). Arginine 1312 carries the post-translational modification Omega-N-methylarginine. Serine 1320 is modified (phosphoserine). The residue at position 1353 (threonine 1353) is a Phosphothreonine. Residue serine 1359 is modified to Phosphoserine. The span at 1364–1376 (SFRERQKYFELEV) shows a compositional bias: basic and acidic residues. Serine 1389 carries the post-translational modification Phosphoserine. Positions 1390-1421 (LVGADDLRKMQEEEARKLQQKRAQMLREEAVT) form a coiled coil. Over residues 1394-1406 (DDLRKMQEEEARK) the composition is skewed to basic and acidic residues. Phosphoserine is present on residues serine 1455 and serine 1458. Residues 1471–1482 (AKAERRHQERLR) show a composition bias toward basic and acidic residues. Phosphoserine is present on residues serine 1485, serine 1496, and serine 1518. Residues 1530 to 1577 (LSKSQEGRGKRGPLERLAEAPSPAPTPSPTPLEDFGLQTSASPGRLPL) are disordered. Residues 1534-1547 (QEGRGKRGPLERLA) are compositionally biased toward basic and acidic residues. Position 1551 is a phosphoserine (serine 1551). A Phosphothreonine modification is found at threonine 1555. Residues serine 1557, serine 1571, and serine 1601 each carry the phosphoserine modification. A disordered region spans residues 1632-1665 (GRPSPGAVGPEDMTLCSSRRSVRPGRRGLGPVPS).

This sequence belongs to the LAP (LRR and PDZ) protein family. Interacts with UBE3A. Interacts with PAK1 and PAK2. Interacts (via PDZ domains) with VANGL2. Interacts (via PDZ domains) with LPP and TRIP6; the interaction is direct. Interacts (via PDZ domains) with TJP2. Interacts (via PDZ domains) with APC; may mediate APC targeting to adherens junctions of epithelial cells. Interacts (via PDZ domains) with TSHR; regulates TSHR trafficking and function. Interacts with ARHGEF7 and GIT1; interacts directly with ARHGEF7. Interacts with CTNNB1. Interacts with MAPK12. Interacts (via PDZ domains 1 and 3) with MCC. Interacts with DLG5. Interacts with STK4/MST1 and LATS1 in the presence of DLG5. Interacts (via PDZ domain 3) with CRTAM (via PDZ-binding motif); the interaction promotes CRTAM and SCRIB polarization in a subset of CD4+ T-cells. Interacts with YES1, when YES1 is in a closed conformation; the interaction facilitates YES1 autophosphorylation. Interacts (via PDZ domains) with VIM; the interaction protects SCRIB from proteasomal degradation and facilitates SCRIB localization to intermediate filaments, the interaction is reduced by cell contact inhibition. Ubiquitinated; targeted for UBE3A-dependent multiubiquitination and degraded. Post-translationally, palmitoylated. Could be depalmitoylated by LYPLA1 and/or LYPLA2. Palmitoylation of SCRIB by ZDHHC7 is required for its localization to cell-cell junctions, function in the establishement of epithelial cell polarity and the regulation of downstream signaling pathways important for epithelial cell differentiation. As to expression, expressed in CD4+ T-cells (at protein level). Found in a wide range of tissues including liver, kidney and spleen. Also expressed in the brain (at protein level).

It localises to the cell membrane. It is found in the cell junction. The protein resides in the adherens junction. Its subcellular location is the cell projection. The protein localises to the lamellipodium. It localises to the cytoplasm. It is found in the postsynapse. The protein resides in the presynapse. Its function is as follows. Scaffold protein involved in different aspects of polarized cell differentiation regulating epithelial and neuronal morphogenesis and T-cell polarization. Via its interaction with CRTAM, required for the late phase polarization of a subset of CD4+ T-cells, which in turn regulates TCR-mediated proliferation and IFNG and IL22 production. Plays a role in cell directional movement, cell orientation, cell sheet organization and Golgi complex polarization at the cell migration front. Promotes epithelial cell layer barrier function via maintaining cell-cell adhesion. Most probably functions in the establishment of apico-basal cell polarity. May function in cell proliferation regulating progression from G1 to S phase and as a positive regulator of apoptosis for instance during acinar morphogenesis of the mammary epithelium. May regulate cell invasion via MAPK-mediated cell migration and adhesion. May play a role in exocytosis and in the targeting of synaptic vesicles to synapses. Functions as an activator of Rac GTPase activity. This is Protein scribble homolog from Mus musculus (Mouse).